The sequence spans 338 residues: UPF0324 membrane protein NMA0465 (338 aa).

10 consecutive transmembrane segments (helical) span residues 5–23 (PFYF…ANYL), 33–55 (HISA…YPQF), 62–84 (GVLF…RLTF), 94–116 (AVVT…GIRY), 123–145 (LVYL…AESV), 155–177 (VAIA…FYTW), 222–239 (IRVM…WLLT), 254–273 (IPWF…FDLL), 280–302 (LFVE…TTHA), and 312–334 (PFVL…NYGI).

The protein belongs to the UPF0324 family.

The protein localises to the cell membrane. The polypeptide is UPF0324 membrane protein NMA0465 (Neisseria meningitidis serogroup A / serotype 4A (strain DSM 15465 / Z2491)).